The primary structure comprises 507 residues: Phospho-2-dehydro-3-deoxyheptonate aldolase 2, chloroplastic (507 aa).

The protein belongs to the class-II DAHP synthase family.

The protein resides in the plastid. The protein localises to the chloroplast. The catalysed reaction is D-erythrose 4-phosphate + phosphoenolpyruvate + H2O = 7-phospho-2-dehydro-3-deoxy-D-arabino-heptonate + phosphate. It participates in metabolic intermediate biosynthesis; chorismate biosynthesis; chorismate from D-erythrose 4-phosphate and phosphoenolpyruvate: step 1/7. The chain is Phospho-2-dehydro-3-deoxyheptonate aldolase 2, chloroplastic (DHS2) from Arabidopsis thaliana (Mouse-ear cress).